We begin with the raw amino-acid sequence, 250 residues long: MEIILGIVQGLTEFLPISSSGHLSVFSKLFNLKPDLSVFALLHLATLAAIVIFVGKELTEIIKGLIKLEKNYINLTLKIIVSTIPAAIFGVLLESKIEASLSNLKIISFFFLVTSAALLISDKIKGNKDLSTLTYKDALVIGIMQALAIFPGISRSGFTLFGSLLIGLEREIALKYSFLVSIPVILGAGLLEIKNISLNSYSISSAIVAFFFGLLSLFILKKATISKNLKIFSAYCIFISIFSFVLGGIK.

The next 7 membrane-spanning stretches (helical) occupy residues 35 to 55 (DLSV…IFVG), 73 to 93 (INLT…GVLL), 100 to 120 (SLSN…ALLI), 146 to 166 (ALAI…SLLI), 171 to 191 (EIAL…AGLL), 200 to 220 (SYSI…LFIL), and 229 to 249 (LKIF…LGGI).

This sequence belongs to the UppP family.

It is found in the cell inner membrane. The catalysed reaction is di-trans,octa-cis-undecaprenyl diphosphate + H2O = di-trans,octa-cis-undecaprenyl phosphate + phosphate + H(+). Catalyzes the dephosphorylation of undecaprenyl diphosphate (UPP). Confers resistance to bacitracin. The protein is Undecaprenyl-diphosphatase of Thermosipho melanesiensis (strain DSM 12029 / CIP 104789 / BI429).